Reading from the N-terminus, the 113-residue chain is Putative insulin-like growth factor 2-associated protein (113 aa).

As to expression, expressed in fetal and adult liver.

The polypeptide is Putative insulin-like growth factor 2-associated protein (Homo sapiens (Human)).